We begin with the raw amino-acid sequence, 420 residues long: MEIISQYGSWLVWITAVFGFFMAFGIGANDVSNSMGTSVGSGTITAKQAIIIALIFESAGAYLAGGEVTQTIKSGVIEPIQFVDTPDILALGMLSTLFASGAWLFIATKMGWPVSGTHTIIGAIIGFACITIGPSSVDWSKIGSIVGSWFVTPVIAGILAYAIFASTQKLIFDTEQPLKNAQKYGPYYMGITVFVLCIVTMKKGLKHVGLNLSNSETLIISLAISLIGMFFFHFYFKSKIFTQSANKGTFGAVEKVFSILMLLTACAMAFAHGSNDVANAIGPLSAVVSIVNEGGKIVSGGALTWWILPLGALGIAVGLITMGQKVMATVGSGITDLTPSRGFAAQFATAMTVVVASGTGLPISTTQTLVGAILGIGFARGIAALNLTVIRNIISSWIVTLPAGAFFAIIIFYVLRTIFN.

The next 12 membrane-spanning stretches (helical) occupy residues 8 to 28 (GSWLVWITAVFGFFMAFGIGA), 49 to 69 (AIIIALIFESAGAYLAGGEVT), 88 to 108 (ILALGMLSTLFASGAWLFIAT), 112 to 132 (WPVSGTHTIIGAIIGFACITI), 145 to 165 (IVGSWFVTPVIAGILAYAIFA), 185 to 205 (GPYYMGITVFVLCIVTMKKGL), 216 to 236 (ETLIISLAISLIGMFFFHFYF), 250 to 270 (FGAVEKVFSILMLLTACAMAF), 300 to 320 (GGALTWWILPLGALGIAVGLI), 343 to 363 (FAAQFATAMTVVVASGTGLPI), 370 to 390 (VGAILGIGFARGIAALNLTVI), and 393 to 413 (IISSWIVTLPAGAFFAIIIFY).

Belongs to the inorganic phosphate transporter (PiT) (TC 2.A.20) family.

It is found in the cell inner membrane. Its function is as follows. Potential transporter for phosphate. The polypeptide is Putative phosphate permease HI_1604 (Haemophilus influenzae (strain ATCC 51907 / DSM 11121 / KW20 / Rd)).